We begin with the raw amino-acid sequence, 293 residues long: Bisanhydrobacterioruberin hydratase (293 aa).

Helical transmembrane passes span 36–56, 66–86, 89–109, 134–154, 171–191, 199–219, and 254–274; these read IAVV…EGLL, FVLF…FPLV, RAGL…LVGV, FGLP…VLLL, ATVM…GFWI, GVPW…VLLF, and LFYT…GLLW.

This sequence belongs to the BABR hydratase family.

It is found in the membrane. It catalyses the reaction bacterioruberin = bisanhydrobacterioruberin + 2 H2O. It participates in carotenoid biosynthesis. Its function is as follows. Involved in the biosynthesis of the acyclic C50 carotenoid bacterioruberin (BR). Catalyzes the reaction that introduces hydroxyl groups to C3'' and C3''' of bisanhydrobacterioruberin (BABR) to generate BR. The protein is Bisanhydrobacterioruberin hydratase of Haloarcula japonica (strain ATCC 49778 / DSM 6131 / JCM 7785 / NBRC 101032 / NCIMB 13157 / TR-1).